The following is a 308-amino-acid chain: Ribosomal protein L11 methyltransferase (308 aa).

S-adenosyl-L-methionine contacts are provided by Thr157, Gly178, Asp200, and Asn243.

It belongs to the methyltransferase superfamily. PrmA family.

The protein localises to the cytoplasm. The catalysed reaction is L-lysyl-[protein] + 3 S-adenosyl-L-methionine = N(6),N(6),N(6)-trimethyl-L-lysyl-[protein] + 3 S-adenosyl-L-homocysteine + 3 H(+). Functionally, methylates ribosomal protein L11. The chain is Ribosomal protein L11 methyltransferase from Desulforamulus reducens (strain ATCC BAA-1160 / DSM 100696 / MI-1) (Desulfotomaculum reducens).